A 373-amino-acid polypeptide reads, in one-letter code: Inhibitor of nuclear factor kappa-B kinase-interacting protein (373 aa).

Basic residues predominate over residues Met1–Gly11. The disordered stretch occupies residues Met1–Ala38. A compositionally biased stretch (basic and acidic residues) spans Glu18–Glu30. The helical transmembrane segment at Gly43–Val59 threads the bilayer. 2 coiled-coil regions span residues Glu64–Ser257 and Thr290–Ile325. The N-linked (GlcNAc...) asparagine glycan is linked to Asn151.

In terms of processing, N-glycosylated at Asn-151.

Its subcellular location is the endoplasmic reticulum membrane. Its function is as follows. Target of p53/TP53 with pro-apoptotic function. The chain is Inhibitor of nuclear factor kappa-B kinase-interacting protein (Ikbip) from Rattus norvegicus (Rat).